Consider the following 1004-residue polypeptide: Glutamate [NMDA] receptor subunit 1 (1004 aa).

Positions 1–39 are cleaved as a signal peptide; that stretch reads MAGTDSPAAARFVYRCLLFAPAIVVGLLLPLTLPPIAAA. At 40–585 the chain is on the extracellular side; sequence QRHTASDNPS…TLVSFLQPFS (546 aa). 7 N-linked (GlcNAc...) asparagine glycosylation sites follow: asparagine 270, asparagine 326, asparagine 357, asparagine 409, asparagine 466, asparagine 493, and asparagine 513. Residues 542–544 and arginine 549 each bind glycine; that span reads PLT. Residues 586–606 form a helical membrane-spanning segment; the sequence is NTLWILVMVSVHVVALVLYLL. Residues 607 to 663 are Cytoplasmic-facing; that stretch reads DRFSPFGRFKLSHSDSNEEKALNLSSAVWFAWGVLLNSGIGEGTPRSFSARVLGMVW. The helical transmembrane segment at 664–684 threads the bilayer; that stretch reads AGFAMIIVASYTANLAAFLVL. At 685-843 the chain is on the extracellular side; that stretch reads ERPKTKLSGI…KTPNTLGLKN (159 aa). An N-linked (GlcNAc...) asparagine glycan is attached at asparagine 705. Positions 715 and 759 each coordinate glycine. Residues 844–864 traverse the membrane as a helical segment; the sequence is MAGVFILVGVGIAGGVGLIII. At 865-1004 the chain is on the cytoplasmic side; sequence EVIYKKHQVK…YTSDVSHLVV (140 aa). A disordered region spans residues 980–1004; that stretch reads TRPQQNILPPRYSPGYTSDVSHLVV. Over residues 994–1004 the composition is skewed to polar residues; it reads GYTSDVSHLVV.

It belongs to the glutamate-gated ion channel (TC 1.A.10.1) family. As to quaternary structure, forms a heteromeric NMDA channel with Nmdar2.

It is found in the cell membrane. The protein resides in the postsynaptic cell membrane. Its subcellular location is the postsynaptic density. Functionally, NMDA receptor subtype of glutamate-gated ion channels with high calcium permeability and voltage-dependent sensitivity to magnesium. Mediated by glycine. This protein plays a key role in synaptic plasticity, synaptogenesis, excitotoxicity, memory acquisition and learning. It mediates neuronal functions in glutamate neurotransmission. Is involved in the cell surface targeting of NMDA receptors. Plays a role in associative learning and in long-term memory consolidation. This is Glutamate [NMDA] receptor subunit 1 from Drosophila pseudoobscura pseudoobscura (Fruit fly).